The following is a 774-amino-acid chain: RNA exonuclease 5 (774 aa).

Over residues 1–19 the composition is skewed to basic and acidic residues; sequence MEPEREGTERHPRKVRESR. A disordered region spans residues 1–22; it reads MEPEREGTERHPRKVRESRQAP. Residues 228-376 enclose the Exonuclease domain; sequence LFGLDCEMCL…EDARTILELA (149 aa). RRM domains lie at 505-579 and 600-679; these read STVY…RPVT and GSIY…RHLH.

The chain is RNA exonuclease 5 from Homo sapiens (Human).